A 459-amino-acid chain; its full sequence is Heat stress transcription factor A-4d (459 aa).

Positions 127-189 form a coiled coil; it reads AESERRELEE…QKNIVASLCE (63 aa). Residues 141–191 are hydrophobic repeat HR-A/B; sequence LKYEKSILVADLQRQNQQQYVINWQMQAMEGRLVAMEQRQKNIVASLCEML. Residues 209–213 carry the Nuclear localization signal motif; the sequence is SKKRR. The span at 364 to 388 shows a compositional bias: polar residues; the sequence is YPTQADVNSEIASSTDTSQDGTSET. The tract at residues 364–398 is disordered; the sequence is YPTQADVNSEIASSTDTSQDGTSETEASHGPTNDV. The AHA motif lies at 397-406; that stretch reads DVFWERFLTE.

It belongs to the HSF family. Class A subfamily. In terms of assembly, homotrimer. Post-translationally, exhibits temperature-dependent phosphorylation.

It localises to the nucleus. Its function is as follows. Transcriptional regulator that specifically binds DNA of heat shock promoter elements (HSE). This chain is Heat stress transcription factor A-4d (HSFA4D), found in Oryza sativa subsp. japonica (Rice).